A 250-amino-acid chain; its full sequence is ATP synthase subunit a (250 aa).

The next 5 membrane-spanning stretches (helical) occupy residues 27–47 (TDTVLSTAIAALIVLALAFYL), 83–103 (IAPFVLPLAVTIFVFILISNW), 129–149 (INYVLALALFVFVCYHAAGIW), 191–211 (IFAGSILVALIALFPPYIMWA), and 219–239 (FDLFVGAIQAFIFALLTILYF).

The protein belongs to the ATPase A chain family. In terms of assembly, F-type ATPases have 2 components, CF(1) - the catalytic core - and CF(0) - the membrane proton channel. CF(1) has five subunits: alpha(3), beta(3), gamma(1), delta(1), epsilon(1). CF(0) has three main subunits: a(1), b(2) and c(9-12). The alpha and beta chains form an alternating ring which encloses part of the gamma chain. CF(1) is attached to CF(0) by a central stalk formed by the gamma and epsilon chains, while a peripheral stalk is formed by the delta and b chains.

The protein localises to the cell membrane. Its function is as follows. Key component of the proton channel; it plays a direct role in the translocation of protons across the membrane. This chain is ATP synthase subunit a, found in Mycobacterium ulcerans (strain Agy99).